We begin with the raw amino-acid sequence, 194 residues long: uncharacterized protein (194 aa).

Positions 2–62 constitute an HTH tetR-type domain; the sequence is QGPRERMVVS…CEAVDYAGEH (61 aa). The H-T-H motif DNA-binding region spans 25–44; that stretch reads AISDVLQHSGAPRGSAYHYF.

This is an uncharacterized protein from Mycobacterium tuberculosis (strain CDC 1551 / Oshkosh).